The primary structure comprises 181 residues: Putative manganese efflux pump MntP (181 aa).

6 helical membrane-spanning segments follow: residues 4 to 24 (VVLLALALSMDAFAVSIGLGA), 31 to 51 (VVLGLKAALYFGVFQALMPLI), 59 to 79 (MLGWLASFAPWVAAGLLALIA), 102 to 122 (VLLLLAIATSIDALAAGFALT), 129 to 149 (LVSCALIGVITAIFSFAGVFI), and 161 to 181 (AELAGGLVLLLIALKIIAVAV).

This sequence belongs to the MntP (TC 9.B.29) family.

The protein localises to the cell inner membrane. Its function is as follows. Probably functions as a manganese efflux pump. This Saccharophagus degradans (strain 2-40 / ATCC 43961 / DSM 17024) protein is Putative manganese efflux pump MntP.